The sequence spans 150 residues: D-aminoacyl-tRNA deacylase (150 aa).

The Gly-cisPro motif, important for rejection of L-amino acids signature appears at 138–139 (GP).

Belongs to the DTD family. As to quaternary structure, homodimer.

It is found in the cytoplasm. It carries out the reaction glycyl-tRNA(Ala) + H2O = tRNA(Ala) + glycine + H(+). It catalyses the reaction a D-aminoacyl-tRNA + H2O = a tRNA + a D-alpha-amino acid + H(+). An aminoacyl-tRNA editing enzyme that deacylates mischarged D-aminoacyl-tRNAs. Also deacylates mischarged glycyl-tRNA(Ala), protecting cells against glycine mischarging by AlaRS. Acts via tRNA-based rather than protein-based catalysis; rejects L-amino acids rather than detecting D-amino acids in the active site. By recycling D-aminoacyl-tRNA to D-amino acids and free tRNA molecules, this enzyme counteracts the toxicity associated with the formation of D-aminoacyl-tRNA entities in vivo and helps enforce protein L-homochirality. This Sorangium cellulosum (strain So ce56) (Polyangium cellulosum (strain So ce56)) protein is D-aminoacyl-tRNA deacylase.